The following is a 229-amino-acid chain: Cytochrome c oxidase subunit 2 (229 aa).

Residues 1 to 26 (MSTWANLGLQDSASPLMEQLIFFHDH) are Mitochondrial intermembrane-facing. The helical transmembrane segment at 27 to 48 (ALLILVMITVLVGYLMFMLFFN) threads the bilayer. The Mitochondrial matrix portion of the chain corresponds to 49–62 (SYVNRFLLHGQLIE). The helical transmembrane segment at 63 to 82 (MIWTILPAIILLFIAMPSLR) threads the bilayer. The Mitochondrial intermembrane portion of the chain corresponds to 83-229 (LLYLLDEINE…IKWISSTVNS (147 aa)). Cu cation contacts are provided by H161, C196, E198, C200, H204, and M207. Residue E198 coordinates Mg(2+).

It belongs to the cytochrome c oxidase subunit 2 family. In terms of assembly, component of the cytochrome c oxidase (complex IV, CIV), a multisubunit enzyme composed of a catalytic core of 3 subunits and several supernumerary subunits. The complex exists as a monomer or a dimer and forms supercomplexes (SCs) in the inner mitochondrial membrane with ubiquinol-cytochrome c oxidoreductase (cytochrome b-c1 complex, complex III, CIII). Requires Cu cation as cofactor.

The protein localises to the mitochondrion inner membrane. The catalysed reaction is 4 Fe(II)-[cytochrome c] + O2 + 8 H(+)(in) = 4 Fe(III)-[cytochrome c] + 2 H2O + 4 H(+)(out). In terms of biological role, component of the cytochrome c oxidase, the last enzyme in the mitochondrial electron transport chain which drives oxidative phosphorylation. The respiratory chain contains 3 multisubunit complexes succinate dehydrogenase (complex II, CII), ubiquinol-cytochrome c oxidoreductase (cytochrome b-c1 complex, complex III, CIII) and cytochrome c oxidase (complex IV, CIV), that cooperate to transfer electrons derived from NADH and succinate to molecular oxygen, creating an electrochemical gradient over the inner membrane that drives transmembrane transport and the ATP synthase. Cytochrome c oxidase is the component of the respiratory chain that catalyzes the reduction of oxygen to water. Electrons originating from reduced cytochrome c in the intermembrane space (IMS) are transferred via the dinuclear copper A center (CU(A)) of subunit 2 and heme A of subunit 1 to the active site in subunit 1, a binuclear center (BNC) formed by heme A3 and copper B (CU(B)). The BNC reduces molecular oxygen to 2 water molecules using 4 electrons from cytochrome c in the IMS and 4 protons from the mitochondrial matrix. The chain is Cytochrome c oxidase subunit 2 (mt:CoII) from Drosophila lowei (Fruit fly).